The following is a 75-amino-acid chain: UPF0291 protein lmo1304 (75 aa).

The tract at residues 56 to 75 (DPNGKDVTPHKVKQLRKNKY) is disordered. Basic residues predominate over residues 65 to 75 (HKVKQLRKNKY).

The protein belongs to the UPF0291 family.

It localises to the cytoplasm. In Listeria monocytogenes serovar 1/2a (strain ATCC BAA-679 / EGD-e), this protein is UPF0291 protein lmo1304.